Reading from the N-terminus, the 515-residue chain is E3 ubiquitin-protein ligase RNF217 (515 aa).

2 disordered regions span residues 1–125 (MGEE…VLAQ) and 147–189 (PEAP…ADPL). Residues 10-22 (GSGGARASGGGSA) show a composition bias toward gly residues. 2 stretches are compositionally biased toward low complexity: residues 39-49 (GPRAAASSSRP) and 147-157 (PEAPSAESPSP). Pro residues predominate over residues 158–178 (SESPPQAPLGPIPASPPPSFP). Residues 179–189 (SSPLSLPADPL) are compositionally biased toward low complexity. The interval 232–451 (MVLMCRVCLE…LSIFGCKYRY (220 aa)) is TRIAD supradomain. Positions 236, 239, 256, 259, 356, 359, 364, 369, 396, and 399 each coordinate Zn(2+). An RING-type 1 zinc finger spans residues 236 to 282 (CRVCLEDKPIKPLPCCKKAVCEECLKIYLSSQVQLGQVEIKCPVTEC). The IBR-type zinc-finger motif lies at 301–369 (IKYKYFLELG…HSPWHEGVNC (69 aa)). An RING-type 2; atypical zinc finger spans residues 396-425 (CPKCKIHIQRTEGCDHMTCSQCNTNFCYRC). C409 is an active-site residue. Zn(2+) is bound by residues C414, C417, C422, C425, H438, and C447. The helical transmembrane segment at 476 to 496 (LILVLGLALGAIAVVIGLFVF) threads the bilayer.

This sequence belongs to the RBR family. RNF217 subfamily. As to quaternary structure, interacts with HAX1.

The protein resides in the membrane. Its subcellular location is the cytoplasm. The enzyme catalyses [E2 ubiquitin-conjugating enzyme]-S-ubiquitinyl-L-cysteine + [acceptor protein]-L-lysine = [E2 ubiquitin-conjugating enzyme]-L-cysteine + [acceptor protein]-N(6)-ubiquitinyl-L-lysine.. It functions in the pathway protein modification; protein ubiquitination. Its function is as follows. E3 ubiquitin-protein ligase which accepts ubiquitin from E2 ubiquitin-conjugating enzymes in the form of a thioester and then directly transfers the ubiquitin to targeted substrates. Mediates the degradation of the iron exporter ferroportin/SLC40A1 and thus regulates iron homeostasis. This chain is E3 ubiquitin-protein ligase RNF217 (Rnf217), found in Mus musculus (Mouse).